The primary structure comprises 30 residues: Brevinin-2PTa (30 aa).

The cysteines at positions 24 and 30 are disulfide-linked.

As to expression, expressed by the skin glands.

It is found in the secreted. Has antibacterial activity against the Gram-positive bacterium S.aureus ATCC 25923 (MIC=18 uM) and the Gram-negative bacterium E.coli ATCC 25726 (MIC=18 uM). This chain is Brevinin-2PTa, found in Pulchrana picturata (Malaysian fire frog).